The primary structure comprises 569 residues: DNA-binding protein eta2 (569 aa).

Disordered stretches follow at residues 1–26 (MMLA…TLSC) and 133–159 (KRKI…AKKR). The span at 9 to 26 (INENQGTRSNLESPTLSC) shows a compositional bias: polar residues. A Phosphoserine modification is found at Ser-21. Myb-like domains lie at 322-371 (LDPK…RFVV) and 377-459 (ETID…EKTI). Residues 459–487 (IASYSSNQRQEEDQGKKRKKRKKKKSKGK) are disordered. Over residues 474 to 487 (KKRKKRKKKKSKGK) the composition is skewed to basic residues.

The protein resides in the nucleus. This chain is DNA-binding protein eta2 (eta2), found in Schizosaccharomyces pombe (strain 972 / ATCC 24843) (Fission yeast).